A 490-amino-acid chain; its full sequence is Glutamyl-tRNA(Gln) amidotransferase subunit A (490 aa).

Residues K78 and S159 each act as charge relay system in the active site. Catalysis depends on S183, which acts as the Acyl-ester intermediate.

Belongs to the amidase family. GatA subfamily. As to quaternary structure, heterotrimer of A, B and C subunits.

The enzyme catalyses L-glutamyl-tRNA(Gln) + L-glutamine + ATP + H2O = L-glutaminyl-tRNA(Gln) + L-glutamate + ADP + phosphate + H(+). In terms of biological role, allows the formation of correctly charged Gln-tRNA(Gln) through the transamidation of misacylated Glu-tRNA(Gln) in organisms which lack glutaminyl-tRNA synthetase. The reaction takes place in the presence of glutamine and ATP through an activated gamma-phospho-Glu-tRNA(Gln). The sequence is that of Glutamyl-tRNA(Gln) amidotransferase subunit A from Paramagnetospirillum magneticum (strain ATCC 700264 / AMB-1) (Magnetospirillum magneticum).